We begin with the raw amino-acid sequence, 237 residues long: E3 ubiquitin-protein ligase RNF166 (237 aa).

The RING-type zinc finger occupies 33-73; that stretch reads CPICLEVYHRPVAIGSCGHTFCGECLQPCLQVPSPLCPLCR. The Zn(2+) site is built by Cys98, Cys101, His113, and Cys117. Residues 98–117 form a C2HC RNF-type zinc finger; it reads CRGCNKKVTLAKMRVHISSC. A UIM domain is found at 221–237; the sequence is DEEAAFQAALALSLSEN.

The protein localises to the cytoplasm. The enzyme catalyses S-ubiquitinyl-[E2 ubiquitin-conjugating enzyme]-L-cysteine + [acceptor protein]-L-lysine = [E2 ubiquitin-conjugating enzyme]-L-cysteine + N(6)-ubiquitinyl-[acceptor protein]-L-lysine.. It participates in protein modification; protein ubiquitination. E3 ubiquitin-protein ligase that promotes the ubiquitination of different substrates. In turn, participates in different biological processes including interferon production or autophagy. Plays a role in the activation of RNA virus-induced interferon-beta production by promoting the ubiquitination of TRAF3 and TRAF6. Also plays a role in the early recruitment of autophagy adapters to bacteria. Mediates 'Lys-29' and 'Lys-33'-linked ubiquitination of SQSTM1 leading to xenophagic targeting of bacteria and inhibition of their replication. This is E3 ubiquitin-protein ligase RNF166 (RNF166) from Homo sapiens (Human).